Reading from the N-terminus, the 528-residue chain is MADDSASPSPSSASPLQHHREALKSSVRNTAASRRREQAIAIGKERREALIRAKRVCRAPISGSDEAEMEEGDMVVDEEKACLEAKTAHAVEELKSALSIQGKGVQKKKIEALRDLRRLLSQPEVPLVDTAIKAGAVPLLVQYLSFGSSDEQLLEAAWCLTNIAAGEPEETKSLLPALPLLIAHLGEKSSTLVAEQCAWAIGNVAGEGAELRSTLLAQGALRPLTRLMFSSKGSTARTAAWAMSNLIKGPDPKAANELITIDGVLNAIIASLEKEDEELATEVAWVVVYLSALSDRGISLIVRSSVPQLLIGRLFSSENLQLLIPVLRGLGNLIAADDYMVDSVLTVGHNIIDQALSGLIKCLKSDNRVLRKESSWALSNIAAGSFEHKKLIFASEATPVLIRLVTSMQFDIRREAAYTLGNLCVVPTGNCELPKIIVEHLVAIVDGGALPGFIHLVRSADVDTAGLGLQFLELVMRGYPNKQGPKLVEMEDGIEAMERFQFHENEQMRNMANGLVDEYFGEDYGLDE.

Low complexity predominate over residues 1 to 15; the sequence is MADDSASPSPSSASP. The tract at residues 1 to 36 is disordered; sequence MADDSASPSPSSASPLQHHREALKSSVRNTAASRRR. ARM repeat units lie at residues 125 to 165, 167 to 206, 209 to 248, 253 to 292, 294 to 335, 338 to 383, 386 to 425, and 438 to 477; these read VPLV…NIAA, EPEETKSLLPALPLLIAHLGEKSSTLVAEQCAWAIGNVAG, AELRSTLLAQGALRPLTRLMFSSKGSTARTAAWAMSNLIK, KAANELITIDGVLNAIIASLEKEDEELATEVAWVVVYLSA, SDRG…NLIA, DYMV…NIAA, FEHKKLIFASEATPVLIRLVTSMQFDIRREAAYTLGNLCV, and VEHLVAIVDGGALPGFIHLVRSADVDTAGLGLQFLELVMR.

The protein belongs to the importin alpha family. In terms of assembly, forms a complex with importin subunit beta-1. The whole complex, most stable and composed of importin alpha, importin beta and NLS substrate, is referred to as PTAC or pore targeting complex. As to expression, expressed in root, callus, and etiolated leaf. Low expression in green leaf.

The protein resides in the cytoplasm. Its subcellular location is the perinuclear region. In terms of biological role, binds specifically and directly to substrates containing either a simple or bipartite NLS motif. Promotes docking of import substrates to the nuclear envelope. The protein is Importin subunit alpha-2 of Oryza sativa subsp. japonica (Rice).